Consider the following 141-residue polypeptide: MTCVLKGCVNEVTVLGHETCSIGHANKLRKQVADMVGVTRRCAENNCGWFVCVIINDFTFDVYNCCGRSHLEKCRKRFEARNREIWKQVERIRGEKASATVKKSHKSKPSKKKFKERKDFGTPKRFLRDDVPLGIDQLFVF.

The segment at 97–119 (ASATVKKSHKSKPSKKKFKERKD) is disordered. Residues 102-115 (KKSHKSKPSKKKFK) are compositionally biased toward basic residues.

This is 16 kDa protein from Beta vulgaris (Sugar beet).